The sequence spans 138 residues: Dehydratase iacD (138 aa).

The region spanning 18 to 113 (GVSEEDFIEW…LKDQDVWMDN (96 aa)) is the EthD domain.

It belongs to the tpcK family.

The protein operates within secondary metabolite biosynthesis. In terms of biological role, dehydratase; part of the gene cluster that mediates the biosynthesis of iso-A82775C, a enylepoxycyclohexane and biosynthetic precursor of the chloropestolide anticancer natural products. Within the cluster, the prenyltransferase iacE prenylates siccayne to generate pestalodiol E, using dimethylallyl diphosphate (DMAPP) as cosubstrate. The probable oxidoreductase iacF is then involved in the epoxidation of pestalodiol F to pestalodiol F, which is further converted to pestalofone A by the short-chain dehydrogenase/reductase iacG. Iso-A82775C is subsequently generated from pestalofone A by the short-chain dehydrogenase/reductase iacC. Iso-A82775C is further condensed with maldoxin via a Diels-Alder reaction to produce the anticancer natural products chloropestolides A to E. This Pestalotiopsis fici (strain W106-1 / CGMCC3.15140) protein is Dehydratase iacD.